We begin with the raw amino-acid sequence, 296 residues long: 33 kDa chaperonin (296 aa).

Cystine bridges form between Cys-236-Cys-238 and Cys-269-Cys-272.

Belongs to the HSP33 family. Post-translationally, under oxidizing conditions two disulfide bonds are formed involving the reactive cysteines. Under reducing conditions zinc is bound to the reactive cysteines and the protein is inactive.

The protein localises to the cytoplasm. In terms of biological role, redox regulated molecular chaperone. Protects both thermally unfolding and oxidatively damaged proteins from irreversible aggregation. Plays an important role in the bacterial defense system toward oxidative stress. The protein is 33 kDa chaperonin of Lactobacillus helveticus (strain DPC 4571).